Consider the following 305-residue polypeptide: tRNA uridine(34) hydroxylase (305 aa).

Positions 124 to 219 (QDEETLVVDT…YLETIPKEES (96 aa)) constitute a Rhodanese domain. C179 serves as the catalytic Cysteine persulfide intermediate.

It belongs to the TrhO family.

It carries out the reaction uridine(34) in tRNA + AH2 + O2 = 5-hydroxyuridine(34) in tRNA + A + H2O. Its function is as follows. Catalyzes oxygen-dependent 5-hydroxyuridine (ho5U) modification at position 34 in tRNAs. This Bartonella bacilliformis (strain ATCC 35685 / KC583 / Herrer 020/F12,63) protein is tRNA uridine(34) hydroxylase.